The following is a 96-amino-acid chain: Co-chaperonin GroES (96 aa).

This sequence belongs to the GroES chaperonin family. In terms of assembly, heptamer of 7 subunits arranged in a ring. Interacts with the chaperonin GroEL.

Its subcellular location is the cytoplasm. Together with the chaperonin GroEL, plays an essential role in assisting protein folding. The GroEL-GroES system forms a nano-cage that allows encapsulation of the non-native substrate proteins and provides a physical environment optimized to promote and accelerate protein folding. GroES binds to the apical surface of the GroEL ring, thereby capping the opening of the GroEL channel. This Solidesulfovibrio magneticus (strain ATCC 700980 / DSM 13731 / RS-1) (Desulfovibrio magneticus) protein is Co-chaperonin GroES.